The primary structure comprises 465 residues: WAS protein family homolog 2 (465 aa).

The segment at 1 to 54 is required for WASH complex assembly; the sequence is MTPVRMQHSLAGQTYAVPLIQPDLRREEAVQQMADALQYLQKVSGDIFSRISQQ. The interval 1–167 is WHD1; sequence MTPVRMQHSL…EGLGGLPSNI (167 aa). Lys220 participates in a covalent cross-link: Glycyl lysine isopeptide (Lys-Gly) (interchain with G-Cter in ubiquitin). 2 disordered regions span residues 297–407 and 422–465; these read QDGV…QGGH and GISG…DWES. A compositionally biased stretch (pro residues) spans 302 to 314; that stretch reads TPPPPPPPPPPAP. Residues 349–465 are VCA; sequence QGAPREVVDP…AEEDEDDWES (117 aa). Residues 361–383 form the WH2 domain; it reads GRATLLESIRQAGGIGKAKLRSM. The span at 382 to 398 shows a compositional bias: basic and acidic residues; it reads SMKERKLEKKKQKEQEQ. Gly residues predominate over residues 424–436; the sequence is SGKGPGAGEGPGG. Positions 456 to 465 are enriched in acidic residues; that stretch reads AEEDEDDWES.

The protein belongs to the WASH1 family. Component of the WASH core complex also described as WASH regulatory complex (SHRC) composed of WASH (WASHC1, WASH2P or WASH3P), WASHC2 (WASHC2A or WASHC2C), WASHC3, WASHC4 and WASHC5. The WASH core complex associates with the F-actin-capping protein dimer (formed by CAPZA1, CAPZA2 or CAPZA3 and CAPZB) in a transient or substoichiometric manner which was initially described as WASH complex. Interacts (via WHD1 region) with WASHC2C; the interaction is direct. Interacts with alpha-tubulin. Interacts with BECN1; WASHC1 and AMBRA1 can competitively interact with BECN1. Interacts with BLOC1S2; may associate with the BLOC-1 complex. Interacts with tubulin gamma chain (TUBG1 or TUBG2). Interacts with EXOC1, EXOC4, EXOC8; in MMP14-positive endosomes in breast tumor cells; indicative for an association with the exocyst complex.

The protein localises to the early endosome membrane. Its subcellular location is the recycling endosome membrane. It localises to the late endosome. It is found in the cytoplasmic vesicle. The protein resides in the autophagosome. The protein localises to the cytoplasm. Its subcellular location is the cytoskeleton. It localises to the microtubule organizing center. It is found in the centrosome. The protein resides in the centriole. Its function is as follows. Acts as a nucleation-promoting factor at the surface of endosomes, where it recruits and activates the Arp2/3 complex to induce actin polymerization, playing a key role in the fission of tubules that serve as transport intermediates during endosome sorting. Involved in endocytic trafficking of EGF. Involved in transferrin receptor recycling. Regulates the trafficking of endosomal alpha5beta1 integrin to the plasma membrane and involved in invasive cell migration. In T-cells involved in endosome-to-membrane recycling of receptors including T-cell receptor (TCR), CD28 and ITGAL; proposed to be implicated in T-cell proliferation and effector function. In dendritic cells involved in endosome-to-membrane recycling of major histocompatibility complex (MHC) class II probably involving retromer and subsequently allowing antigen sampling, loading and presentation during T-cell activation. Involved in Arp2/3 complex-dependent actin assembly driving Salmonella typhimurium invasion independent of ruffling. Involved in the exocytosis of MMP14 leading to matrix remodeling during invasive migration and implicating late endosome-to-plasma membrane tubular connections and cooperation with the exocyst complex. Involved in negative regulation of autophagy independently from its role in endosomal sorting by inhibiting BECN1 ubiquitination to inactivate PIK3C3/Vps34 activity. This is WAS protein family homolog 2 (WASH2P) from Homo sapiens (Human).